Consider the following 67-residue polypeptide: MNLALMKMWFALGSMGLMFLAVASIYLSRFKCQNRFLKIAISSFAYMCMLISGIIVFVVVFSGPVNE.

2 consecutive transmembrane segments (helical) span residues 8-28 (MWFALGSMGLMFLAVASIYLS) and 41-61 (ISSFAYMCMLISGIIVFVVVF).

Its subcellular location is the cell membrane. This is an uncharacterized protein from Bacillus subtilis (strain 168).